An 874-amino-acid chain; its full sequence is MIMKQEPTTYQPEEIEKKIYEICSHRGYFEIDGNEAIQEKNKRFCLMMPPPNVTGVLHIGHALTLSLQDILARYKRMDGYKTLYQPGLDHAGIATQNVVEKQLLSQGIKKEDLGREEFIKKVWEWKEKSGGAILEQMKRLGVSAAFSRTRFTMDKGLQRAVKLAFLKWYEKGLIIQDNYMVNWCTKDGALSDIEVEYEERKGALYYIRYYLENQKDYLVVATTRPETLFGDSALMVNPNDERYKHLVGQKAILPLIHRTIPIIADEHVEMEFGTGCVKVTPGHDFNDYEVGKRHHLETIKIFDEKGILNAHCGEFENLERLEARDKVVERLKENALLEKIEEHTHQVGHCYRCHNVVEPYVSKQWFVKPEIAQSSIEKIQQGLARFYPSNWINNYNAWMRELRPWCISRQLFWGHQIPVFTCENNHQFVSLDTPLSCPTCKSETLEQDKDVLDTWFSSGLWAFSTLGWGQEKSGLFNESDLKDFYPNTTLITGFDILFFWVARMLFCSESLLGELPFKDIYLHALVRDEKGEKMSKSKGNVIDPLEMIEKYGADSLRFTLANLCATGRDIKLSTTHLENNKNFANKLFNAASYLKLKQESFKDKERLNEYQTPLGRYAKSRLNSATKEARNALDNYRFNDATTLLYRFLWGEFCDWFIEFSKVENEAIDELGSVLKEALKLLHPFMPFISESLYHKLSNTELENTESIMVMPYPKDLAQDEKLEHEFEVIKDCIVSLRRLKIMLETPPIVLKEASVGLREAIENTERLQTYAQKLARLEKVSVISSKPLKSVSDVGEFCQTYANLENLDLSPLVARLKKQLEKLEKEKLKLNLHNENFVKNAPKSVLEKAKESLKTLLEKESKIKQELDLLEQP.

The 'HIGH' region signature appears at Pro51 to His61. Positions Lys533–Ser537 match the 'KMSKS' region motif. Residue Lys536 participates in ATP binding. The stretch at Leu813–Gln873 forms a coiled coil.

The protein belongs to the class-I aminoacyl-tRNA synthetase family. ValS type 1 subfamily. Monomer.

The protein resides in the cytoplasm. The enzyme catalyses tRNA(Val) + L-valine + ATP = L-valyl-tRNA(Val) + AMP + diphosphate. Its function is as follows. Catalyzes the attachment of valine to tRNA(Val). As ValRS can inadvertently accommodate and process structurally similar amino acids such as threonine, to avoid such errors, it has a 'posttransfer' editing activity that hydrolyzes mischarged Thr-tRNA(Val) in a tRNA-dependent manner. The chain is Valine--tRNA ligase from Helicobacter pylori (strain ATCC 700392 / 26695) (Campylobacter pylori).